A 697-amino-acid chain; its full sequence is Putative ATP-dependent RNA helicase an3 (697 aa).

Positions 27–189 (ESGVAGTKGR…PLAPNDRVEQ (163 aa)) are disordered. Composition is skewed to basic and acidic residues over residues 89–111 (GRSDRGFYDRENSGWNSGRDKDA), 135–144 (RRTDDRRQDG), and 151–170 (RSDKSGFGRFDRGNSRWSDD). The Q motif motif lies at 221–249 (ESFHDVTMGEIIMGNIQLTRYTRPTPVQK). Residues 241 to 248 (YTRPTPVQ) and 265 to 272 (AQTGSGKT) contribute to the ATP site. The Helicase ATP-binding domain occupies 252-444 (IPIIIEKRDL…RDFLDEYIFL (193 aa)). Residues 388–391 (DEAD) carry the DEAD box motif. The region spanning 455 to 616 (NITQKVVWVE…EVPSWLENMA (162 aa)) is the Helicase C-terminal domain. The tract at residues 619-666 (QHHKSSSRGRSKSRFSGGFGAKDYRQSSGAGSSFGSSRGGRSSGHGGS) is disordered. Positions 622-631 (KSSSRGRSKS) are enriched in basic residues. Over residues 645–654 (SSGAGSSFGS) the composition is skewed to low complexity. The segment covering 655–666 (SRGGRSSGHGGS) has biased composition (gly residues).

This sequence belongs to the DEAD box helicase family. DDX3/DED1 subfamily.

It is found in the cell membrane. The protein localises to the nucleus. The protein resides in the cytoplasm. Its subcellular location is the stress granule. It localises to the inflammasome. It is found in the cell projection. The protein localises to the lamellipodium. It catalyses the reaction ATP + H2O = ADP + phosphate + H(+). In terms of biological role, multifunctional ATP-dependent RNA helicase. The ATPase activity can be stimulated by various ribo-and deoxynucleic acids indicative for a relaxed substrate specificity. In vitro can unwind partially double-stranded DNA with a preference for 5'-single-stranded DNA overhangs. Involved in many cellular processes, which do not necessarily require its ATPase/helicase catalytic activities. Involved in the regulation of transcription and translation initiation. Involved in innate immunity. Involved in both stress and inflammatory responses. May negatively regulate extrinsic apoptotic signaling pathway via death domain receptors. May be involved in mitotic chromosome segregation. Required for canonical Wnt signaling involved in anteroposterior neural patterning. In Xenopus laevis (African clawed frog), this protein is Putative ATP-dependent RNA helicase an3 (an3).